Consider the following 122-residue polypeptide: Cysteine proteinase inhibitor 5 (122 aa).

The first 26 residues, 1–26, serve as a signal peptide directing secretion; sequence MTSKVVFLLLLSLVVVLLPLYASAAA. Residues 29–117 enclose the Cystatin domain; it reads GGWSPISNVT…RNLTSFEPAN (89 aa). A glycan (N-linked (GlcNAc...) asparagine) is linked at N36. The Secondary area of contact signature appears at 72 to 76; the sequence is QVVSG. N-linked (GlcNAc...) asparagine glycosylation is present at N109.

Belongs to the cystatin family. Phytocystatin subfamily.

The protein localises to the secreted. Its function is as follows. Specific inhibitor of cysteine proteinases. Probably involved in the regulation of endogenous processes and in defense against pests and pathogens. In Arabidopsis thaliana (Mouse-ear cress), this protein is Cysteine proteinase inhibitor 5 (CYS5).